Here is a 566-residue protein sequence, read N- to C-terminus: Chondroitin sulfate proteoglycan 5 (566 aa).

A signal peptide spans 1-30; it reads MGRAGGGGPDWGPPPVLLLLGVTLVLTAGA. Residues 31–423 lie on the Extracellular side of the membrane; it reads VPARETGSAI…SIITDFQVMC (393 aa). O-linked (Xyl...) (chondroitin sulfate) serine glycosylation is present at Ser38. Residues 56 to 93 form a disordered region; the sequence is ANDTREEAGLPAAGEDETSWTERGSEMAAVGPGVGPEE. Asn57 is a glycosylation site (N-linked (GlcNAc...) asparagine). Thr76 is a glycosylation site (O-linked (GalNAc...) threonine). A glycan (O-linked (Xyl...) (chondroitin sulfate) serine) is linked at Ser123. Thr132 carries O-linked (GalNAc...) threonine glycosylation. Disordered regions lie at residues 137-173, 218-249, and 263-327; these read DEALGSSTMPPAIPEATETSGPPSPAVHDKPSVGPEL, DSEGRGADMGSFPGSPGTSENHPDTEGETPSW, and ESDF…PPQH. Residue Ser143 is glycosylated (O-linked (GalNAc...) serine). O-linked (GalNAc...) threonine glycosylation is found at Thr144, Thr153, and Thr155. O-linked (GalNAc...) serine glycans are attached at residues Ser156 and Ser160. Residues 163–173 are compositionally biased toward basic and acidic residues; the sequence is VHDKPSVGPEL. Thr235 carries O-linked (GalNAc...) threonine glycosylation. The interaction with TNC and TNR stretch occupies residues 265–301; sequence DFYPTTSFYDDLEEEEEEEEDKDTVGGGDLEDENDLL. A compositionally biased stretch (acidic residues) spans 274 to 286; sequence DDLEEEEEEEEDK. Asn355 and Asn367 each carry an N-linked (GlcNAc...) asparagine glycan. The EGF-like domain occupies 371–413; it reads RSVCDLFPSYCHNGGQCYLVENIGAFCRCNTQDYIWHKGMRCE. Intrachain disulfides connect Cys374–Cys387, Cys381–Cys397, and Cys399–Cys412. 2 positions are modified to phosphoserine: Gly394 and Phe396. Residue Cys397 is modified to Phosphothreonine. The helical transmembrane segment at 424–444 threads the bilayer; sequence VAVGSAALVLLLLFMMTVFFA. The tract at residues 442 to 460 is interaction with GOPC; that stretch reads FFAKKLYLLKTENTKLRRT. Residues 445–566 are Cytoplasmic-facing; sequence KKLYLLKTEN…GVNCLQNNLT (122 aa). Residues Ser467, Ser475, and Ser477 each carry the phosphoserine modification. Thr478 is modified (phosphothreonine). Ser483 and Ser543 each carry phosphoserine. Residues 531 to 566 are disordered; the sequence is KEEESFNIQNSMSPKLEGGKGDQDDLGVNCLQNNLT.

Binds TNR and probably TNC. Interacts with ERBB3 and GOPC. Interacts with MDK; this interaction is independent of the presence of chondroitin sulfate chains and promotes elongation of oligodendroglial precursor-like cells. N-glycosylated. Post-translationally, O-glycosylated; contains chondroitin sulfate glycans. Part-time proteoglycan, expressed in part as a proteoglycan exhibiting chondroitin sulfate glycans and in part as a non-proteoglycan form. The relative amount of both forms depends on tissues and tissue maturation. In the cerebellum the 2 forms coexist while in the cerebrum the proteoglycan form is predominant. In terms of processing, phosphorylated; in intracellular and extracellular parts. In terms of tissue distribution, expressed in olfactory bulb, hippocampus, brain stem, spinal cord, cerebrum and cerebellum. Expressed by Purkinje cells in the cerebellum (at protein level). Expressed in immature and mature cerebellum (isoform 1, isoform 2 and isoform 3).

The protein localises to the cell membrane. It is found in the synaptic cell membrane. It localises to the endoplasmic reticulum membrane. Its subcellular location is the golgi apparatus membrane. The protein resides in the cell surface. The protein localises to the secreted. May function as a growth and differentiation factor involved in neuritogenesis. May induce ERBB3 activation. This chain is Chondroitin sulfate proteoglycan 5 (Cspg5), found in Mus musculus (Mouse).